The sequence spans 256 residues: MVATKSVLSAVALAGVAAAETIDVMVGQGGLKFVPDNIKAKAGDEVVFHFVMGHHDVTLGRYDSPCMPIQGESIWSGVVDTVEKGKGVTFTVPIHDDKTKWIYCSVAKHCQNGMSLVINEPSSGDNQADYKDRAKIVPQSGSPTQVKGGTLGGSGGSGGSSSSSASSSGSSSGTTSAPTPTGGHSSSHPSSTSGSDSSNTQSTPDATLIPSGSIPSATGSGSHSSTPTASPGAAAGLKGSAVLAGVVALGAWIGLL.

The signal sequence occupies residues 1–19 (MVATKSVLSAVALAGVAAA). The segment at 135–235 (KIVPQSGSPT…TPTASPGAAA (101 aa)) is disordered. A compositionally biased stretch (gly residues) spans 149-159 (GTLGGSGGSGG). Composition is skewed to low complexity over residues 160–204 (SSSS…QSTP) and 215–235 (PSAT…GAAA). A233 is lipidated: GPI-anchor amidated alanine. Residues 234-256 (AAGLKGSAVLAGVVALGAWIGLL) constitute a propeptide, removed in mature form.

The protein resides in the cell membrane. Its subcellular location is the secreted. The chain is Extracellular serine-rich protein ARB_03024 from Arthroderma benhamiae (strain ATCC MYA-4681 / CBS 112371) (Trichophyton mentagrophytes).